Consider the following 270-residue polypeptide: Phosphonoacetaldehyde hydrolase (270 aa).

D11 acts as the Nucleophile in catalysis. D11 and A13 together coordinate Mg(2+). K53 serves as the catalytic Schiff-base intermediate with substrate. Residue D187 participates in Mg(2+) binding.

Belongs to the HAD-like hydrolase superfamily. PhnX family. In terms of assembly, homodimer. The cofactor is Mg(2+).

The catalysed reaction is phosphonoacetaldehyde + H2O = acetaldehyde + phosphate + H(+). In terms of biological role, involved in phosphonate degradation. This is Phosphonoacetaldehyde hydrolase from Salmonella paratyphi C (strain RKS4594).